We begin with the raw amino-acid sequence, 423 residues long: Testican-2 (423 aa).

Positions M1 to A22 are cleaved as a signal peptide. At S72 the chain carries Phosphoserine. Disulfide bonds link C90–C101, C95–C111, C136–C166, C139–C159, and C148–C180. The region spanning G130–C182 is the Kazal-like domain. N225 is a glycosylation site (N-linked (GlcNAc...) asparagine). The 67-residue stretch at K309–C375 folds into the Thyroglobulin type-1 domain. 3 disulfides stabilise this stretch: C312/C336, C347/C354, and C356/C375. Residues S382 and S387 are each glycosylated (O-linked (Xyl...) (glycosaminoglycan) serine). Positions S387–W423 are disordered. Residues W391–W423 are compositionally biased toward acidic residues.

Post-translationally, O-glycosylated; contains chondroitin sulfate and heparan sulfate. In terms of tissue distribution, brain specific.

Its subcellular location is the secreted. The protein resides in the extracellular space. It is found in the extracellular matrix. Functionally, may participate in diverse steps of neurogenesis. Binds calcium. The polypeptide is Testican-2 (Spock2) (Mus musculus (Mouse)).